Consider the following 448-residue polypeptide: Probable glycine dehydrogenase (decarboxylating) subunit 1 (448 aa).

Belongs to the GcvP family. N-terminal subunit subfamily. The glycine cleavage system is composed of four proteins: P, T, L and H. In this organism, the P 'protein' is a heterodimer of two subunits.

It catalyses the reaction N(6)-[(R)-lipoyl]-L-lysyl-[glycine-cleavage complex H protein] + glycine + H(+) = N(6)-[(R)-S(8)-aminomethyldihydrolipoyl]-L-lysyl-[glycine-cleavage complex H protein] + CO2. The glycine cleavage system catalyzes the degradation of glycine. The P protein binds the alpha-amino group of glycine through its pyridoxal phosphate cofactor; CO(2) is released and the remaining methylamine moiety is then transferred to the lipoamide cofactor of the H protein. This chain is Probable glycine dehydrogenase (decarboxylating) subunit 1, found in Pyrococcus furiosus (strain ATCC 43587 / DSM 3638 / JCM 8422 / Vc1).